A 306-amino-acid polypeptide reads, in one-letter code: Ciliary microtubule inner protein 2B (306 aa).

The tract at residues 61 to 92 (QSNPFPPPRDHSFDGGSQELGGRRQHPGDPNL) is disordered.

This sequence belongs to the CIMIP2 family. As to expression, expressed in airway epithelial cells.

It localises to the cytoplasm. It is found in the cytoskeleton. Its subcellular location is the cilium axoneme. Microtubule inner protein (MIP) part of the dynein-decorated doublet microtubules (DMTs) in cilia axoneme, which is required for motile cilia beating. This Xenopus tropicalis (Western clawed frog) protein is Ciliary microtubule inner protein 2B (cimip2b).